Reading from the N-terminus, the 705-residue chain is 3-hydroxypropionate--CoA ligase [ADP-forming] (705 aa).

The ATP-grasp domain occupies 25 to 61 (KSILKNYGVKVPPYALVTSAEEAAKEAKKIGFPLVMK). Position 51–61 (51–61 (AKKIGFPLVMK)) interacts with ATP.

In the N-terminal section; belongs to the acetate CoA ligase beta subunit family. This sequence in the C-terminal section; belongs to the acetate CoA ligase alpha subunit family. Mg(2+) is required as a cofactor. It depends on Mn(2+) as a cofactor.

It carries out the reaction 3-hydroxypropanoate + ATP + CoA = 3-hydroxypropanoyl-CoA + ADP + phosphate. Its function is as follows. Involved in thaumarchaeal hydroxypropionate/hydroxybutyrate (HP/HB) cycle, a modified version of the autotrophic HP/HB cycle of Crenarchaeota. Catalyzes the formation of 3-hydroxypropionyl-CoA, ADP and phosphate from 3-hydroxypropionate, coenzyme A (CoA) and ATP. Can also use 4-hydroxybutyrate, propionate and butyrate, with poor catalytic efficiency. In Nitrosopumilus maritimus (strain SCM1), this protein is 3-hydroxypropionate--CoA ligase [ADP-forming].